Here is a 686-residue protein sequence, read N- to C-terminus: Translation initiation factor IF-2 (686 aa).

The interval M35–R99 is disordered. Over residues L50 to K68 the composition is skewed to basic and acidic residues. Residues D69–M79 are compositionally biased toward basic residues. The segment covering E87 to R99 has biased composition (basic and acidic residues). The tr-type G domain maps to L186–K355. Positions G195–T202 are G1. Residue G195 to T202 coordinates GTP. Residues G220 to H224 are G2. The tract at residues D241–G244 is G3. GTP-binding positions include D241–H245 and N295–D298. The tract at residues N295 to D298 is G4. The tract at residues S331–L333 is G5.

It belongs to the TRAFAC class translation factor GTPase superfamily. Classic translation factor GTPase family. IF-2 subfamily.

The protein resides in the cytoplasm. One of the essential components for the initiation of protein synthesis. Protects formylmethionyl-tRNA from spontaneous hydrolysis and promotes its binding to the 30S ribosomal subunits. Also involved in the hydrolysis of GTP during the formation of the 70S ribosomal complex. This is Translation initiation factor IF-2 from Halothermothrix orenii (strain H 168 / OCM 544 / DSM 9562).